A 470-amino-acid polypeptide reads, in one-letter code: Sulfate adenylyltransferase subunit 1 (470 aa).

The region spanning 22–237 (KEVLRFITCG…LEEVPVKSEE (216 aa)) is the tr-type G domain. The tract at residues 31–38 (GSVDDGKS) is G1. 31–38 (GSVDDGKS) provides a ligand contact to GTP. Residues 89–93 (GITID) are G2. Residues 110 to 113 (DTPG) form a G3 region. Residues 110 to 114 (DTPGH) and 165 to 168 (NKMD) each bind GTP. Residues 165 to 168 (NKMD) are G4. Positions 202-204 (SAK) are G5.

Belongs to the TRAFAC class translation factor GTPase superfamily. Classic translation factor GTPase family. CysN/NodQ subfamily. Heterodimer composed of CysD, the smaller subunit, and CysN.

The catalysed reaction is sulfate + ATP + H(+) = adenosine 5'-phosphosulfate + diphosphate. It participates in sulfur metabolism; hydrogen sulfide biosynthesis; sulfite from sulfate: step 1/3. In terms of biological role, with CysD forms the ATP sulfurylase (ATPS) that catalyzes the adenylation of sulfate producing adenosine 5'-phosphosulfate (APS) and diphosphate, the first enzymatic step in sulfur assimilation pathway. APS synthesis involves the formation of a high-energy phosphoric-sulfuric acid anhydride bond driven by GTP hydrolysis by CysN coupled to ATP hydrolysis by CysD. The sequence is that of Sulfate adenylyltransferase subunit 1 from Methylorubrum populi (strain ATCC BAA-705 / NCIMB 13946 / BJ001) (Methylobacterium populi).